Consider the following 343-residue polypeptide: Holliday junction branch migration complex subunit RuvB (343 aa).

The tract at residues 1-186 (MTEEFDIRQE…FGINLHLEYY (186 aa)) is large ATPase domain (RuvB-L). Residues Leu25, Arg26, Gly67, Lys70, Thr71, Thr72, 133–135 (EDY), Arg176, Tyr186, and Arg223 each bind ATP. Mg(2+) is bound at residue Thr71. The small ATPAse domain (RuvB-S) stretch occupies residues 187–257 (DVHTITGIVE…IACYALEALN (71 aa)). Residues 260–343 (RYGLDNVDHK…PRPHRPSLFD (84 aa)) are head domain (RuvB-H). DNA contacts are provided by Arg315 and Arg320.

This sequence belongs to the RuvB family. As to quaternary structure, homohexamer. Forms an RuvA(8)-RuvB(12)-Holliday junction (HJ) complex. HJ DNA is sandwiched between 2 RuvA tetramers; dsDNA enters through RuvA and exits via RuvB. An RuvB hexamer assembles on each DNA strand where it exits the tetramer. Each RuvB hexamer is contacted by two RuvA subunits (via domain III) on 2 adjacent RuvB subunits; this complex drives branch migration. In the full resolvosome a probable DNA-RuvA(4)-RuvB(12)-RuvC(2) complex forms which resolves the HJ.

The protein localises to the cytoplasm. The catalysed reaction is ATP + H2O = ADP + phosphate + H(+). The RuvA-RuvB-RuvC complex processes Holliday junction (HJ) DNA during genetic recombination and DNA repair, while the RuvA-RuvB complex plays an important role in the rescue of blocked DNA replication forks via replication fork reversal (RFR). RuvA specifically binds to HJ cruciform DNA, conferring on it an open structure. The RuvB hexamer acts as an ATP-dependent pump, pulling dsDNA into and through the RuvAB complex. RuvB forms 2 homohexamers on either side of HJ DNA bound by 1 or 2 RuvA tetramers; 4 subunits per hexamer contact DNA at a time. Coordinated motions by a converter formed by DNA-disengaged RuvB subunits stimulates ATP hydrolysis and nucleotide exchange. Immobilization of the converter enables RuvB to convert the ATP-contained energy into a lever motion, pulling 2 nucleotides of DNA out of the RuvA tetramer per ATP hydrolyzed, thus driving DNA branch migration. The RuvB motors rotate together with the DNA substrate, which together with the progressing nucleotide cycle form the mechanistic basis for DNA recombination by continuous HJ branch migration. Branch migration allows RuvC to scan DNA until it finds its consensus sequence, where it cleaves and resolves cruciform DNA. This chain is Holliday junction branch migration complex subunit RuvB, found in Porphyromonas gingivalis (strain ATCC BAA-308 / W83).